Here is a 363-residue protein sequence, read N- to C-terminus: MKIGVFVPIGNNGWLISTHAPQYMPTFELNKAIVQKAEHYHFDFALSMIKLRGFGGKTEFWDHNLESFTLMAGLAAVTSRIQIYATAATLTLPPAIVARMAATIDSISGGRFGVNLVTGWQKPEYEQMGIWPGDDYFSRRYDYLTEYVQVLRDLWGSGKSDFKGDFFTMDDCRVSPQPSVPMKVICAGQSDAGMAFSARYADFNFCFGKGVNTPTAFAPTAARMKQAAEQTGRDVGSYVLFMVIADETDDAARAKWEHYKAGADEEALSWLTEQSQKDTRSGTDTNVRQMADPTSAVNINMGTLVGSYASVARMLDEVASVPGAEGVLLTFDDFLSGIETFGERIQPLMQCRAHLPALTQEVA.

FMN-binding positions include 49-50, Asn-115, Glu-124, 140-141, and Ser-190; these read IK and RY.

Belongs to the NtaA/SnaA/DszA monooxygenase family. RutA subfamily.

It carries out the reaction uracil + FMNH2 + NADH + O2 = (Z)-3-ureidoacrylate + FMN + NAD(+) + H2O + H(+). The enzyme catalyses thymine + FMNH2 + NADH + O2 = (Z)-2-methylureidoacrylate + FMN + NAD(+) + H2O + H(+). In terms of biological role, catalyzes the pyrimidine ring opening between N-3 and C-4 by an unusual flavin hydroperoxide-catalyzed mechanism, adding oxygen atoms in the process to yield ureidoacrylate peracid, that immediately reacts with FMN forming ureidoacrylate and FMN-N(5)-oxide. The FMN-N(5)-oxide reacts spontaneously with NADH to produce FMN. Requires the flavin reductase RutF to regenerate FMN in vivo. The sequence is that of Pyrimidine monooxygenase RutA from Escherichia coli O6:K15:H31 (strain 536 / UPEC).